We begin with the raw amino-acid sequence, 309 residues long: Probable manganese-dependent inorganic pyrophosphatase (309 aa).

Mn(2+)-binding residues include His9, Asp13, Asp15, Asp75, His97, and Asp149.

The protein belongs to the PPase class C family. The cofactor is Mn(2+).

The protein localises to the cytoplasm. The enzyme catalyses diphosphate + H2O = 2 phosphate + H(+). In Bacillus cereus (strain 03BB102), this protein is Probable manganese-dependent inorganic pyrophosphatase.